We begin with the raw amino-acid sequence, 213 residues long: Uridine kinase (213 aa).

15–22 (GASASGKS) contacts ATP.

The protein belongs to the uridine kinase family.

It is found in the cytoplasm. The catalysed reaction is uridine + ATP = UMP + ADP + H(+). The enzyme catalyses cytidine + ATP = CMP + ADP + H(+). The protein operates within pyrimidine metabolism; CTP biosynthesis via salvage pathway; CTP from cytidine: step 1/3. It functions in the pathway pyrimidine metabolism; UMP biosynthesis via salvage pathway; UMP from uridine: step 1/1. The sequence is that of Uridine kinase from Klebsiella pneumoniae (strain 342).